Consider the following 219-residue polypeptide: Ras-related protein Rab-3D (219 aa).

Ala2 carries the post-translational modification N-acetylalanine. Residue 29-37 coordinates GDP; sequence GNSSVGKTS. GTP is bound by residues Ser31, Ser32, Val33, Gly34, Lys35, Thr36, Ser37, Pro49, and Ser53. Position 36 (Thr36) interacts with Mg(2+). Residues 49–58 carry the Switch 1 motif; sequence PAFVSTVGID. Mg(2+) is bound by residues Thr54 and Asp77. A GTP-binding site is contributed by Gly80. A Switch 2 motif is present at residues 80-96; that stretch reads GQERYRTITTAYYRGAM. Residue Thr86 is modified to Phosphothreonine; by LRRK2. Positions 135, 136, 138, 166, and 167 each coordinate GTP. Residues 135–138 and 165–167 each bind GDP; these read NKCD and SAK. Position 190 is a phosphoserine (Ser190). Positions 190 to 199 are enriched in low complexity; the sequence is SLEPSSSSGS. Residues 190–219 form a disordered region; sequence SLEPSSSSGSNGKGPAVGDAPAPQPSSCSC. 2 S-geranylgeranyl cysteine lipidation sites follow: Cys217 and Cys219. The residue at position 219 (Cys219) is a Cysteine methyl ester.

It belongs to the small GTPase superfamily. Rab family. Interacts with RIMS1, RIMS2, RPH3A, RPH3AL and RAB3IP. The GTP-bound form interacts with REP15. Interacts with CHM and CHML; phosphorylation at Thr-86 disrupts these interactions. Interacts with MADD (via uDENN domain); the GTP-bound form is preferred for interaction. The cofactor is Mg(2+). In terms of processing, phosphorylation of Thr-86 in the switch II region by LRRK2 prevents the association of RAB regulatory proteins, including CHM and CHML. In terms of tissue distribution, highly expressed in granulocytes of peripheral blood. Constitutively expressed at low levels in all hematopoietic cell lines investigated.

It localises to the cell membrane. The enzyme catalyses GTP + H2O = GDP + phosphate + H(+). Regulated by guanine nucleotide exchange factors (GEFs) which promote the exchange of bound GDP for free GTP. Regulated by GTPase activating proteins (GAPs) which increase the GTP hydrolysis activity. Inhibited by GDP dissociation inhibitors (GDIs) which prevent Rab-GDP dissociation. Functionally, the small GTPases Rab are key regulators of intracellular membrane trafficking, from the formation of transport vesicles to their fusion with membranes. Rabs cycle between an inactive GDP-bound form and an active GTP-bound form that is able to recruit to membranes different sets of downstream effectors directly responsible for vesicle formation, movement, tethering and fusion. RAB3D may be involved in the insulin-induced exocytosis of GLUT4-containing vesicles in adipocytes. This chain is Ras-related protein Rab-3D, found in Homo sapiens (Human).